The primary structure comprises 704 residues: Elongation factor G (704 aa).

The region spanning 8-291 (DKVRNIGIMA…TVVECLPSPV (284 aa)) is the tr-type G domain. GTP is bound by residues 17–24 (AHIDAGKT), 90–94 (DTPGH), and 144–147 (NKMD).

Belongs to the TRAFAC class translation factor GTPase superfamily. Classic translation factor GTPase family. EF-G/EF-2 subfamily.

It is found in the cytoplasm. Its function is as follows. Catalyzes the GTP-dependent ribosomal translocation step during translation elongation. During this step, the ribosome changes from the pre-translocational (PRE) to the post-translocational (POST) state as the newly formed A-site-bound peptidyl-tRNA and P-site-bound deacylated tRNA move to the P and E sites, respectively. Catalyzes the coordinated movement of the two tRNA molecules, the mRNA and conformational changes in the ribosome. The protein is Elongation factor G of Prosthecochloris aestuarii (strain DSM 271 / SK 413).